The primary structure comprises 69 residues: Putative membrane protein insertion efficiency factor (69 aa).

This sequence belongs to the UPF0161 family.

The protein resides in the cell inner membrane. Could be involved in insertion of integral membrane proteins into the membrane. In Azoarcus sp. (strain BH72), this protein is Putative membrane protein insertion efficiency factor.